Consider the following 121-residue polypeptide: Cell division protein FtsB (121 aa).

The Cytoplasmic portion of the chain corresponds to 1 to 6 (MRNWRW). Residues 7-24 (LLLVLAVLLAWLQYRFWF) form a helical membrane-spanning segment. Residues 25 to 121 (GPGNSGEVMM…AASADPVDHP (97 aa)) lie on the Periplasmic side of the membrane. Residues 31 to 66 (EVMMLEAQVAHQTRDNEGLRQRNQALAAEVKDLKDG) are a coiled coil. A disordered region spans residues 98 to 121 (PPAAQEAAPPAQPPAASADPVDHP).

It belongs to the FtsB family. In terms of assembly, part of a complex composed of FtsB, FtsL and FtsQ.

Its subcellular location is the cell inner membrane. Functionally, essential cell division protein. May link together the upstream cell division proteins, which are predominantly cytoplasmic, with the downstream cell division proteins, which are predominantly periplasmic. The protein is Cell division protein FtsB of Xanthomonas campestris pv. campestris (strain 8004).